The sequence spans 193 residues: Chaperone protein TorD (193 aa).

The protein belongs to the TorD/DmsD family. TorD subfamily.

The protein localises to the cytoplasm. Functionally, involved in the biogenesis of TorA. Acts on TorA before the insertion of the molybdenum cofactor and, as a result, probably favors a conformation of the apoenzyme that is competent for acquiring the cofactor. The chain is Chaperone protein TorD from Histophilus somni (strain 129Pt) (Haemophilus somnus).